Consider the following 252-residue polypeptide: Chitooligosaccharide deacetylase (252 aa).

Mg(2+) is bound by residues histidine 61 and histidine 125.

It belongs to the YdjC deacetylase family. ChbG subfamily. In terms of assembly, homodimer. Requires Mg(2+) as cofactor.

It localises to the cytoplasm. It carries out the reaction N,N'-diacetylchitobiose + H2O = N-acetyl-beta-D-glucosaminyl-(1-&gt;4)-D-glucosamine + acetate. The enzyme catalyses diacetylchitobiose-6'-phosphate + H2O = N'-monoacetylchitobiose-6'-phosphate + acetate. Its pathway is glycan degradation; chitin degradation. Its function is as follows. Involved in the degradation of chitin. ChbG is essential for growth on the acetylated chitooligosaccharides chitobiose and chitotriose but is dispensable for growth on cellobiose and chitosan dimer, the deacetylated form of chitobiose. Deacetylation of chitobiose-6-P and chitotriose-6-P is necessary for both the activation of the chb promoter by the regulatory protein ChbR and the hydrolysis of phosphorylated beta-glucosides by the phospho-beta-glucosidase ChbF. Catalyzes the removal of only one acetyl group from chitobiose-6-P to yield monoacetylchitobiose-6-P, the inducer of ChbR and the substrate of ChbF. This Salmonella paratyphi B (strain ATCC BAA-1250 / SPB7) protein is Chitooligosaccharide deacetylase.